A 1013-amino-acid polypeptide reads, in one-letter code: Retinoblastoma-related protein 1 (1013 aa).

Residues 406–607 (TPVSTAMTTA…EKGSSMYNSL (202 aa)) form a domain A region. The tract at residues 406–858 (TPVSTAMTTA…NEIFIPAVKP (453 aa)) is pocket. The segment at 608 to 727 (IVARPSLALE…PGGGGETCAE (120 aa)) is spacer. Positions 728 to 858 (TGINIFFTKI…NEIFIPAVKP (131 aa)) are domain B. Phosphoserine is present on residues serine 885 and serine 898. A disordered region spans residues 979–1013 (VANSLNLQNQNQNQNGSDASSSGGAAPLKTEPTDS). Low complexity predominate over residues 980 to 1004 (ANSLNLQNQNQNQNGSDASSSGGAA).

It belongs to the retinoblastoma protein (RB) family. In terms of assembly, interacts with the begomovirus replication-associated protein (Rep), the nanovirus Clink protein, the mastrevirus RepA protein, E2FA, E2FB and E2FC. Interacts with MSI1 through its Domain A. Interacts with ATPK1/S6K1. Interacts with SCR. Interacts with HAT2. Interacts with FAMA. Interacts with MYB124 and MYB88. Component of a DREAM-like complex which modulates a variety of developmentally regulated genes and of the mitotic genes in proliferating and differentiated cells. Associates with MYB3R3 in both earlier and later stages of leaves development. Interacts with MYB3R4 only at early stages of leaves development. In terms of processing, highly phosphorylated by CDKA-1 during G1 to S phase transition. Once hyper-phosphorylated, becomes inactive and unable to interact with E2F. Ubiquitinated. Subject to proteasome-dependent degradation during sucrose starvation. Expressed in actively dividing cells. Detected in the shoot apical meristem, in young leaf primordia and in both sporophytic tissue and the megagametophyte.

It localises to the nucleus. Its function is as follows. Key regulator of entry into cell division. Acts as a transcription repressor of E2F target genes, whose activity is required for progress from the G1 to the S phase of the cell cycle. Hyperphosphorylation by CDKA-1 prevents the binding to E2F transcription factors, allowing G1 to S phase transition to operate. Forms a stable complex with E2FA that functions in maintaining cell proliferation through repression of cell differentiation. Plays a central role in the mechanism controlling meristem cell differentiation, cell fate establishment and cell fate maintenance during organogenesis and gametogenesis. Required during lateral organ production. Also involved in controlling asymmetric divisions of stem cells in different stem cell niches. Acts as a negative regulator of cell proliferation during leaf and gametophytes development. At later stages of development, restricts the progression through additional endocycles. In the leaf, plays a role in the control of the mesophyll differentiation. Another role is its implication in the regulation of imprinted genes. Acts together with MSI1 to repress the expression of MET1 during gametogenesis. This in turn activates expression of the imprinted genes FIS2 and FWA. Regulates many genes of the polycomb repressive complex 2 (PRC2). Plays an important role in meiosis affecting different aspects of this complex process. Functions as a positive regulator of the developmental switch from embryonic heterotrophic growth to autotrophic growth. Interaction with mastrevirus RepA or nanovirus Clink protein disrupts the RBR/E2F interaction and releases the transcription of replicative enzymes needed by the virus by increasing the E2F DNA-binding activity. This chain is Retinoblastoma-related protein 1 (RBR1), found in Arabidopsis thaliana (Mouse-ear cress).